A 222-amino-acid chain; its full sequence is GTP cyclohydrolase 1 (222 aa).

Zn(2+)-binding residues include Cys111, His114, and Cys182.

It belongs to the GTP cyclohydrolase I family. Homomer.

The enzyme catalyses GTP + H2O = 7,8-dihydroneopterin 3'-triphosphate + formate + H(+). It participates in cofactor biosynthesis; 7,8-dihydroneopterin triphosphate biosynthesis; 7,8-dihydroneopterin triphosphate from GTP: step 1/1. This is GTP cyclohydrolase 1 from Shigella boydii serotype 18 (strain CDC 3083-94 / BS512).